A 126-amino-acid chain; its full sequence is Small ribosomal subunit protein uS13 (126 aa).

A disordered region spans residues 94-126 (RGLPVHGQRTSTNARTRKGPRRAIAGKKKPGKK). Basic residues predominate over residues 108–126 (RTRKGPRRAIAGKKKPGKK).

The protein belongs to the universal ribosomal protein uS13 family. In terms of assembly, part of the 30S ribosomal subunit. Forms a loose heterodimer with protein S19. Forms two bridges to the 50S subunit in the 70S ribosome.

In terms of biological role, located at the top of the head of the 30S subunit, it contacts several helices of the 16S rRNA. In the 70S ribosome it contacts the 23S rRNA (bridge B1a) and protein L5 of the 50S subunit (bridge B1b), connecting the 2 subunits; these bridges are implicated in subunit movement. Contacts the tRNAs in the A and P-sites. This chain is Small ribosomal subunit protein uS13, found in Streptomyces griseus subsp. griseus (strain JCM 4626 / CBS 651.72 / NBRC 13350 / KCC S-0626 / ISP 5235).